We begin with the raw amino-acid sequence, 338 residues long: Phosphate acyltransferase (338 aa).

This sequence belongs to the PlsX family. As to quaternary structure, homodimer. Probably interacts with PlsY.

It is found in the cytoplasm. It carries out the reaction a fatty acyl-[ACP] + phosphate = an acyl phosphate + holo-[ACP]. It functions in the pathway lipid metabolism; phospholipid metabolism. Functionally, catalyzes the reversible formation of acyl-phosphate (acyl-PO(4)) from acyl-[acyl-carrier-protein] (acyl-ACP). This enzyme utilizes acyl-ACP as fatty acyl donor, but not acyl-CoA. In Salinibacter ruber (strain DSM 13855 / M31), this protein is Phosphate acyltransferase.